A 736-amino-acid polypeptide reads, in one-letter code: Catalase-peroxidase (736 aa).

A cross-link (tryptophyl-tyrosyl-methioninium (Trp-Tyr) (with M-250)) is located at residues 96-224 (WHSAGTYRTG…LAAVQMGLIY (129 aa)). His-97 functions as the Proton acceptor in the catalytic mechanism. The segment at residues 224-250 (YVNPEGPDGNPDPVASGRDVRETFGRM) is a cross-link (tryptophyl-tyrosyl-methioninium (Tyr-Met) (with W-96)). His-265 provides a ligand contact to heme b.

This sequence belongs to the peroxidase family. Peroxidase/catalase subfamily. As to quaternary structure, homodimer or homotetramer. The cofactor is heme b. In terms of processing, formation of the three residue Trp-Tyr-Met cross-link is important for the catalase, but not the peroxidase activity of the enzyme.

It catalyses the reaction H2O2 + AH2 = A + 2 H2O. It carries out the reaction 2 H2O2 = O2 + 2 H2O. Bifunctional enzyme with both catalase and broad-spectrum peroxidase activity. In Pelobacter propionicus (strain DSM 2379 / NBRC 103807 / OttBd1), this protein is Catalase-peroxidase.